We begin with the raw amino-acid sequence, 304 residues long: PHO85 cyclin-9 (304 aa).

The Cyclin N-terminal domain occupies 19–146 (EMIQFLATST…LLEYLNWDVR (128 aa)).

Belongs to the cyclin family. PCL1,2 subfamily. As to quaternary structure, forms a cyclin-CDK complex with PHO85.

M/G1-specific cyclin partner of the cyclin-dependent kinase (CDK) PHO85. May have a role in bud site selection in G1 phase. This is PHO85 cyclin-9 (PCL9) from Saccharomyces cerevisiae (strain ATCC 204508 / S288c) (Baker's yeast).